Here is a 148-residue protein sequence, read N- to C-terminus: Deoxyuridine 5'-triphosphate nucleotidohydrolase (148 aa).

Residues arginine 67–glycine 69, asparagine 80, leucine 84–aspartate 86, and methionine 94 contribute to the substrate site.

It belongs to the dUTPase family. It depends on Mg(2+) as a cofactor.

It carries out the reaction dUTP + H2O = dUMP + diphosphate + H(+). The protein operates within pyrimidine metabolism; dUMP biosynthesis; dUMP from dCTP (dUTP route): step 2/2. Functionally, this enzyme is involved in nucleotide metabolism: it produces dUMP, the immediate precursor of thymidine nucleotides and it decreases the intracellular concentration of dUTP so that uracil cannot be incorporated into DNA. The chain is Deoxyuridine 5'-triphosphate nucleotidohydrolase from Burkholderia ambifaria (strain MC40-6).